The sequence spans 608 residues: Glutamine--fructose-6-phosphate aminotransferase [isomerizing] (608 aa).

The Nucleophile; for GATase activity role is filled by cysteine 2. A Glutamine amidotransferase type-2 domain is found at 2-217 (CGIVGYSGKK…DKEFVVLTSE (216 aa)). 2 SIS domains span residues 285–424 (TKEQ…NKNT) and 453–598 (KVQK…VDKP). Residue lysine 603 is the For Fru-6P isomerization activity of the active site.

In terms of assembly, homodimer.

It localises to the cytoplasm. The enzyme catalyses D-fructose 6-phosphate + L-glutamine = D-glucosamine 6-phosphate + L-glutamate. Catalyzes the first step in hexosamine metabolism, converting fructose-6P into glucosamine-6P using glutamine as a nitrogen source. In Clostridium acetobutylicum (strain ATCC 824 / DSM 792 / JCM 1419 / IAM 19013 / LMG 5710 / NBRC 13948 / NRRL B-527 / VKM B-1787 / 2291 / W), this protein is Glutamine--fructose-6-phosphate aminotransferase [isomerizing].